Here is a 128-residue protein sequence, read N- to C-terminus: Cytochrome c-type biogenesis protein CcmE (128 aa).

The Cytoplasmic segment spans residues 1 to 8 (MQKRVRNR). Residues 9 to 29 (LITIIICFCSACLGISIILYN) form a helical; Signal-anchor for type II membrane protein membrane-spanning segment. Residues 30–128 (LEKNIVFFLP…KHDENYRPPQ (99 aa)) are Extracellular-facing. Heme is bound by residues His-120 and Tyr-124.

Belongs to the CcmE/CycJ family.

The protein localises to the cell membrane. Functionally, heme chaperone required for the biogenesis of c-type cytochromes. Transiently binds heme delivered by CcmC and transfers the heme to apo-cytochromes in a process facilitated by CcmF and CcmH. This Rickettsia africae (strain ESF-5) protein is Cytochrome c-type biogenesis protein CcmE.